Consider the following 200-residue polypeptide: Claudin-11 (200 aa).

Met-1 is a topological domain (cytoplasmic). A helical transmembrane segment spans residues 2 to 22 (VATCLQVVGFVTSFVGWIGVI). Residues 23 to 75 (VTTSTNDWVVTCGYTIPTCRKLDELGSKGLWADCVMATGLYHCKPLVDILPCR) are Extracellular-facing. Residues 76–96 (ALMIAASVLGLPAILLLLTVL) form a helical membrane-spanning segment. The Cytoplasmic portion of the chain corresponds to 97–115 (PCIRMGQEPGVAKYRRAQL). A helical membrane pass occupies residues 116–136 (AGVLLILLALCAIVATIWFPV). The Extracellular segment spans residues 137–150 (CAHRETTIVSFGYS). A helical membrane pass occupies residues 151–171 (LYAGWIGAVLCLVGGCVILCC). The Cytoplasmic segment spans residues 172–200 (AGDAQAFGENRFYYTAGSSSPTHAKSAHV). Phosphoserine is present on residues Ser-190 and Ser-191.

It belongs to the claudin family. In terms of assembly, interacts with tetraspanin-3/TSPAN3. Interacts with OCLN.

The protein localises to the cell junction. The protein resides in the tight junction. Its subcellular location is the cell membrane. Plays a major role in tight junction-specific obliteration of the intercellular space, through calcium-independent cell-adhesion activity. This Pongo abelii (Sumatran orangutan) protein is Claudin-11 (CLDN11).